A 723-amino-acid chain; its full sequence is Transcription factor E2F7 (723 aa).

Residues 121 to 146 (AEEEEEEELDDSCQYEALDESERRPS) form a disordered region. A compositionally biased stretch (acidic residues) spans 122-139 (EEEEEEELDDSCQYEALD). DNA-binding regions lie at residues 147 to 216 (RKQK…VWHG) and 264 to 349 (RKDK…KWIG). Polar residues-rich tracts occupy residues 356–370 (SSNSDDLRGQISNSG) and 395–405 (LISSAPSTPHR). Disordered regions lie at residues 356-379 (SSNSDDLRGQISNSGTERREKMAR), 395-417 (LISSAPSTPHRYSTDEPVDYSRK), 489-546 (SLRK…ASFG), 650-689 (EHHGNVPATTSSPRAEESPKPAQTQTPVTPKEASLGSKSF), and 702-723 (QSAARKRGSAQRRLDIGHTAAN). Residues 494 to 503 (ERSEEDDHQT) are compositionally biased toward basic and acidic residues. Positions 520–535 (SESLSSSTRRSPVCSP) are enriched in low complexity.

Belongs to the E2F/DP family. In terms of assembly, homodimer and heterodimer: mainly forms homodimers and, to a lesser extent, heterodimers with e2f8.

Its subcellular location is the nucleus. Atypical E2F transcription factor that participates in various processes such as angiogenesis and polyploidization of specialized cells. Mainly acts as a transcription repressor that binds DNA independently of DP proteins and specifically recognizes the E2 recognition site 5'-TTTC[CG]CGC-3'. Directly represses transcription of classical E2F transcription factors such as e2f1. Acts as a regulator of S-phase by recognizing and binding the E2-related site 5'-TTCCCGCC-3' and mediating repression of G1/S-regulated genes. Acts as a promoter of sprouting angiogenesis, possibly by acting as a transcription activator and promoting expression of vegfa. This chain is Transcription factor E2F7 (e2f7), found in Danio rerio (Zebrafish).